The sequence spans 230 residues: MRKLSRRQKENRAKTKDSIYSNLEDAITILQETATAKFTETVELHANLNIDPKYADQQLRTTVTLPHGIGKTINIAVLTNDSNFTEAREAGADRVGSDDLIEEISQGNISFDLLIATPDMMPKLAKLGRVLGPKGLMPSPKSGTVSTTLTATLSEFKKGKFEYKADKAGVVHVSFGKSNFTHSQLMENLTALYKSIEQNRPSGVKGKYFKSLFICTTMGPSIQLDLNIFL.

It belongs to the universal ribosomal protein uL1 family. In terms of assembly, part of the 50S ribosomal subunit.

The protein localises to the plastid. It is found in the chloroplast. Its function is as follows. Binds directly to 23S rRNA. Might be involved in E site tRNA release (Potential). This is Large ribosomal subunit protein uL1c (rpl1) from Trieres chinensis (Marine centric diatom).